Consider the following 354-residue polypeptide: Hyaluronan and proteoglycan link protein 1 (354 aa).

Positions 1 to 15 are excised as a propeptide; sequence MKSLLLLVLISFCWA. 2 N-linked (GlcNAc...) asparagine glycosylation sites follow: Asn-21 and Asn-56. One can recognise an Ig-like V-type domain in the interval 38–152; the sequence is PRLLVEAEQA…EGLEDDTAVV (115 aa). 5 cysteine pairs are disulfide-bonded: Cys-61–Cys-139, Cys-181–Cys-252, Cys-205–Cys-226, Cys-279–Cys-349, and Cys-304–Cys-325. 2 consecutive Link domains span residues 159 to 254 and 259 to 351; these read VVFP…FCFT and GRFY…YCFR.

This sequence belongs to the HAPLN family.

It localises to the secreted. Its subcellular location is the extracellular space. The protein localises to the extracellular matrix. Functionally, stabilizes the aggregates of proteoglycan monomers with hyaluronic acid in the extracellular cartilage matrix. This chain is Hyaluronan and proteoglycan link protein 1 (HAPLN1), found in Bos taurus (Bovine).